We begin with the raw amino-acid sequence, 60 residues long: Large ribosomal subunit protein bL33 (60 aa).

This sequence belongs to the bacterial ribosomal protein bL33 family.

This chain is Large ribosomal subunit protein bL33, found in Chlorobium chlorochromatii (strain CaD3).